The primary structure comprises 729 residues: Heterogeneous nuclear ribonucleoprotein M (729 aa).

The span at 1–13 shows a compositional bias: low complexity; sequence MAAGVEAAAEVAA. A disordered region spans residues 1-65; it reads MAAGVEAAAE…GGNRFEPYSN (65 aa). At Ala-2 the chain carries N-acetylalanine. Lys-17 participates in a covalent cross-link: Glycyl lysine isopeptide (Lys-Gly) (interchain with G-Cter in SUMO2). The residue at position 29 (Ser-29) is a Phosphoserine. Glycyl lysine isopeptide (Lys-Gly) (interchain with G-Cter in SUMO2) cross-links involve residues Lys-37, Lys-68, and Lys-82. Residues 37–49 show a composition bias toward basic and acidic residues; the sequence is KGEERPTQNEKRK. RRM domains follow at residues 70–148 and 203–280; these read YRAF…EDPD and STVF…MDER. Ser-85 carries the post-translational modification Phosphoserine. Glycyl lysine isopeptide (Lys-Gly) (interchain with G-Cter in SUMO2) cross-links involve residues Lys-87 and Lys-126. N6-acetyllysine; alternate is present on Lys-133. Lys-133 participates in a covalent cross-link: Glycyl lysine isopeptide (Lys-Gly) (interchain with G-Cter in SUMO2); alternate. Glycyl lysine isopeptide (Lys-Gly) (interchain with G-Cter in SUMO2) cross-links involve residues Lys-142 and Lys-144. Phosphoserine is present on Ser-203. A Glycyl lysine isopeptide (Lys-Gly) (interchain with G-Cter in SUMO2) cross-link involves residue Lys-220. Lys-276 is modified (N6-acetyllysine; alternate). Lys-276 is covalently cross-linked (Glycyl lysine isopeptide (Lys-Gly) (interchain with G-Cter in SUMO2); alternate). Glycyl lysine isopeptide (Lys-Gly) (interchain with G-Cter in SUMO2) cross-links involve residues Lys-284 and Lys-344. 2 positions are modified to phosphoserine: Ser-364 and Ser-376. Glycyl lysine isopeptide (Lys-Gly) (interchain with G-Cter in SUMO2) cross-links involve residues Lys-380 and Lys-387. Ser-396 is modified (phosphoserine). Tandem repeats lie at residues 399–404, 406–411, 414–419, and 425–430. The interval 399 to 607 is 27 X 6 AA repeats of [GEVSTPAN]-[ILMV]-[DE]-[RH]-[MLVI]-[GAV]; it reads GIERMGPGID…ALGAGIERMG (209 aa). Phosphoserine is present on Ser-431. 3 consecutive repeat copies span residues 432–437, 439–444, and 445–450. At Ser-451 the chain carries Phosphoserine. Tandem repeats lie at residues 452-457, 460-465, 467-472, and 474-479. Ser-467 carries the post-translational modification Phosphoserine. Ser-480 is subject to Phosphoserine. Repeat copies occupy residues 481-486, 492-497, 499-504, 506-511, 513-518, 520-525, 527-532, 539-544, 546-551, 553-558, 561-566, 567-571, 574-579, 580-584, 587-592, and 602-607. Arg-495 is modified (omega-N-methylarginine). Ser-527 carries the phosphoserine modification. A Phosphoserine modification is found at Ser-574. A Phosphoserine modification is found at Ser-587. A phosphoserine mark is found at Ser-617, Ser-632, and Ser-636. Residue Lys-650 forms a Glycyl lysine isopeptide (Lys-Gly) (interchain with G-Cter in SUMO2) linkage. Residues 652–728 form the RRM 3 domain; that stretch reads CQIFVRNLPF…REIDVRIDRN (77 aa). Position 664 is a phosphothreonine (Thr-664). Lys-666 is covalently cross-linked (Glycyl lysine isopeptide (Lys-Gly) (interchain with G-Cter in SUMO2)). At Lys-671 the chain carries N6-acetyllysine. Glycyl lysine isopeptide (Lys-Gly) (interchain with G-Cter in SUMO2) cross-links involve residues Lys-684 and Lys-691. N6-acetyllysine; alternate is present on Lys-697. Lys-697 is covalently cross-linked (Glycyl lysine isopeptide (Lys-Gly) (interchain with G-Cter in SUMO2); alternate). Lys-697 is covalently cross-linked (Glycyl lysine isopeptide (Lys-Gly) (interchain with G-Cter in SUMO1); alternate). Ser-700 is subject to Phosphoserine. Residue Lys-715 forms a Glycyl lysine isopeptide (Lys-Gly) (interchain with G-Cter in SUMO2) linkage.

As to quaternary structure, identified in the spliceosome C complex. Interacts with PPIA/CYPA. Post-translationally, sumoylated.

The protein localises to the nucleus. In terms of biological role, pre-mRNA binding protein in vivo, binds avidly to poly(G) and poly(U) RNA homopolymers in vitro. Involved in splicing. Acts as a receptor for carcinoembryonic antigen in Kupffer cells, may initiate a series of signaling events leading to tyrosine phosphorylation of proteins and induction of IL-1 alpha, IL-6, IL-10 and tumor necrosis factor alpha cytokines. This Mus musculus (Mouse) protein is Heterogeneous nuclear ribonucleoprotein M (Hnrnpm).